The primary structure comprises 24 residues: Ascaphin-2 (24 aa).

As to expression, expressed by the skin glands.

Its subcellular location is the secreted. Functionally, antimicrobial peptide that shows higher potency against Gram-negative bacteria than against Gram-positive bacteria. Has a very week hemolytic activity. The sequence is that of Ascaphin-2 from Ascaphus truei (Coastal tailed frog).